The sequence spans 142 residues: Large-conductance mechanosensitive channel (142 aa).

2 helical membrane passes run 14–34 and 86–106; these read VVDL…VSSL and FGQF…VFLV.

Belongs to the MscL family. In terms of assembly, homopentamer.

Its subcellular location is the cell inner membrane. In terms of biological role, channel that opens in response to stretch forces in the membrane lipid bilayer. May participate in the regulation of osmotic pressure changes within the cell. This chain is Large-conductance mechanosensitive channel, found in Rhizorhabdus wittichii (strain DSM 6014 / CCUG 31198 / JCM 15750 / NBRC 105917 / EY 4224 / RW1) (Sphingomonas wittichii).